The sequence spans 182 residues: Small ribosomal subunit protein uS4c (182 aa).

Residues 82–143 (MRLDNILFRL…KQRSKALIQN (62 aa)) form the S4 RNA-binding domain.

This sequence belongs to the universal ribosomal protein uS4 family. As to quaternary structure, part of the 30S ribosomal subunit. Contacts protein S5. The interaction surface between S4 and S5 is involved in control of translational fidelity.

It localises to the plastid. The protein localises to the chloroplast. One of the primary rRNA binding proteins, it binds directly to 16S rRNA where it nucleates assembly of the body of the 30S subunit. In terms of biological role, with S5 and S12 plays an important role in translational accuracy. The sequence is that of Small ribosomal subunit protein uS4c (rps4) from Isophysis tasmanica.